Here is a 235-residue protein sequence, read N- to C-terminus: Small ribosomal subunit protein eS4 (235 aa).

One can recognise an S4 RNA-binding domain in the interval 37–100 (LPLGIIIRDI…NETYRMFQDE (64 aa)).

Belongs to the eukaryotic ribosomal protein eS4 family.

The protein is Small ribosomal subunit protein eS4 of Methanosarcina barkeri (strain Fusaro / DSM 804).